A 696-amino-acid polypeptide reads, in one-letter code: Polyribonucleotide nucleotidyltransferase (696 aa).

The Mg(2+) site is built by Asp489 and Asp495. The KH domain occupies 556 to 615 (PQYVTMKINPEKIRDVIGKGGVVIREITEATNCAIDISDDGTIKIAAHTTEEGEAAKRRI). The S1 motif domain occupies 625-693 (GKVYEGTVVK…RQGRVRLSMK (69 aa)).

This sequence belongs to the polyribonucleotide nucleotidyltransferase family. Component of the RNA degradosome, which is a multiprotein complex involved in RNA processing and mRNA degradation. The cofactor is Mg(2+).

The protein resides in the cytoplasm. The enzyme catalyses RNA(n+1) + phosphate = RNA(n) + a ribonucleoside 5'-diphosphate. Its function is as follows. Involved in mRNA degradation. Catalyzes the phosphorolysis of single-stranded polyribonucleotides processively in the 3'- to 5'-direction. The protein is Polyribonucleotide nucleotidyltransferase of Coxiella burnetii (strain RSA 331 / Henzerling II).